The primary structure comprises 104 residues: Small ribosomal subunit protein uS10 (104 aa).

It belongs to the universal ribosomal protein uS10 family. Part of the 30S ribosomal subunit.

Involved in the binding of tRNA to the ribosomes. This Dichelobacter nodosus (strain VCS1703A) protein is Small ribosomal subunit protein uS10.